Consider the following 396-residue polypeptide: Elongation factor Tu (396 aa).

One can recognise a tr-type G domain in the interval 10–206; sequence KPHCNIGTIG…NVDEYIPQPE (197 aa). The tract at residues 19–26 is G1; that stretch reads GHVDHGKT. 19–26 lines the GTP pocket; the sequence is GHVDHGKT. T26 is a binding site for Mg(2+). The interval 60–64 is G2; the sequence is GITIS. A G3 region spans residues 81–84; the sequence is DCPG. GTP-binding positions include 81–85 and 136–139; these read DCPGH and NKCD. A G4 region spans residues 136–139; it reads NKCD. The G5 stretch occupies residues 174–176; it reads SAL.

This sequence belongs to the TRAFAC class translation factor GTPase superfamily. Classic translation factor GTPase family. EF-Tu/EF-1A subfamily. In terms of assembly, monomer.

It localises to the cytoplasm. The enzyme catalyses GTP + H2O = GDP + phosphate + H(+). Its function is as follows. GTP hydrolase that promotes the GTP-dependent binding of aminoacyl-tRNA to the A-site of ribosomes during protein biosynthesis. The polypeptide is Elongation factor Tu (Bradyrhizobium diazoefficiens (strain JCM 10833 / BCRC 13528 / IAM 13628 / NBRC 14792 / USDA 110)).